Consider the following 269-residue polypeptide: Meiotic drive suppressor wtf5 (269 aa).

Positions 1–65 are disordered; it reads MKNNYTSLKS…NTHRENHSYG (65 aa). The span at 19–30 shows a compositional bias: basic and acidic residues; the sequence is KTDHEIDLEKGP. 3 helical membrane-spanning segments follow: residues 73–95, 110–132, and 206–228; these read LLIILLISFTSIILFNAPEVCYL, WTLFGFWCLVCTLALIFLTYFYE, and WGLKCSLADHIIFVVLSILVFIA.

It belongs to the WTF family. Homomer. Interacts with other proteins that exhibit high sequence similarity.

The protein resides in the spore membrane. It localises to the vacuole membrane. In terms of biological role, acts as a suppressor component of the dual wtf meiotic drive system, and can suppress but not confer meiotic drive by compatible poisons. Wtf meiotic drive systems promote unequal transmission of alleles from the parental zygote to progeny spores by encoding a poison and an antidote from the same locus; the poison is trans-acting and forms toxic aggregates in all spores within an ascus, wherease the antidote is spore-specific and targets aggregates for degradation by the vacuole. Meiotic drive by wtf systems therefore lead to poisoning of all progeny that do not inherit the dual poison/antidote allele, or express a compatible antidote. The polypeptide is Meiotic drive suppressor wtf5 (Schizosaccharomyces pombe (strain 972 / ATCC 24843) (Fission yeast)).